Reading from the N-terminus, the 442-residue chain is tRNA modification GTPase MnmE (442 aa).

(6S)-5-formyl-5,6,7,8-tetrahydrofolate-binding residues include Arg24, Glu82, and Lys120. The region spanning 217–367 (GLHIVITGEP…LVSVIKEKVE (151 aa)) is the TrmE-type G domain. GTP is bound by residues 227–232 (NVGKST), 246–252 (SEYVGTT), and 271–274 (DTAG). 2 residues coordinate Mg(2+): Ser231 and Thr252. Lys442 is a binding site for (6S)-5-formyl-5,6,7,8-tetrahydrofolate.

Belongs to the TRAFAC class TrmE-Era-EngA-EngB-Septin-like GTPase superfamily. TrmE GTPase family. In terms of assembly, homodimer. Heterotetramer of two MnmE and two MnmG subunits. It depends on K(+) as a cofactor.

Its subcellular location is the cytoplasm. Exhibits a very high intrinsic GTPase hydrolysis rate. Involved in the addition of a carboxymethylaminomethyl (cmnm) group at the wobble position (U34) of certain tRNAs, forming tRNA-cmnm(5)s(2)U34. This Wolbachia sp. subsp. Brugia malayi (strain TRS) protein is tRNA modification GTPase MnmE.